Reading from the N-terminus, the 611-residue chain is DNA mismatch repair protein MutL (611 aa).

Residues 353–387 (NRQAAGGNHFATPAPAAAPRPASTASSSWQRQEPV) are disordered. Residues 363–380 (ATPAPAAAPRPASTASSS) show a composition bias toward low complexity.

It belongs to the DNA mismatch repair MutL/HexB family.

Functionally, this protein is involved in the repair of mismatches in DNA. It is required for dam-dependent methyl-directed DNA mismatch repair. May act as a 'molecular matchmaker', a protein that promotes the formation of a stable complex between two or more DNA-binding proteins in an ATP-dependent manner without itself being part of a final effector complex. This is DNA mismatch repair protein MutL from Erwinia tasmaniensis (strain DSM 17950 / CFBP 7177 / CIP 109463 / NCPPB 4357 / Et1/99).